A 358-amino-acid chain; its full sequence is Aminomethyltransferase (358 aa).

Belongs to the GcvT family. As to quaternary structure, the glycine cleavage system is composed of four proteins: P, T, L and H.

It catalyses the reaction N(6)-[(R)-S(8)-aminomethyldihydrolipoyl]-L-lysyl-[protein] + (6S)-5,6,7,8-tetrahydrofolate = N(6)-[(R)-dihydrolipoyl]-L-lysyl-[protein] + (6R)-5,10-methylene-5,6,7,8-tetrahydrofolate + NH4(+). The glycine cleavage system catalyzes the degradation of glycine. The chain is Aminomethyltransferase from Francisella tularensis subsp. mediasiatica (strain FSC147).